We begin with the raw amino-acid sequence, 152 residues long: Deoxyuridine 5'-triphosphate nucleotidohydrolase (152 aa).

Residues 71–73, Asn84, 88–90, and Met98 each bind substrate; these read RSG and LID.

Belongs to the dUTPase family. Requires Mg(2+) as cofactor.

The catalysed reaction is dUTP + H2O = dUMP + diphosphate + H(+). Its pathway is pyrimidine metabolism; dUMP biosynthesis; dUMP from dCTP (dUTP route): step 2/2. Its function is as follows. This enzyme is involved in nucleotide metabolism: it produces dUMP, the immediate precursor of thymidine nucleotides and it decreases the intracellular concentration of dUTP so that uracil cannot be incorporated into DNA. The protein is Deoxyuridine 5'-triphosphate nucleotidohydrolase of Klebsiella pneumoniae subsp. pneumoniae (strain ATCC 700721 / MGH 78578).